The primary structure comprises 352 residues: Uroporphyrinogen decarboxylase (352 aa).

Substrate contacts are provided by residues 26–30 (RQAGR), aspartate 76, tyrosine 153, serine 208, and histidine 323.

The protein belongs to the uroporphyrinogen decarboxylase family. As to quaternary structure, homodimer.

It is found in the cytoplasm. It catalyses the reaction uroporphyrinogen III + 4 H(+) = coproporphyrinogen III + 4 CO2. The protein operates within porphyrin-containing compound metabolism; protoporphyrin-IX biosynthesis; coproporphyrinogen-III from 5-aminolevulinate: step 4/4. Catalyzes the decarboxylation of four acetate groups of uroporphyrinogen-III to yield coproporphyrinogen-III. This is Uroporphyrinogen decarboxylase from Prochlorococcus marinus (strain NATL2A).